Consider the following 549-residue polypeptide: Undecaprenyl phosphate-alpha-4-amino-4-deoxy-L-arabinose arabinosyl transferase 2 (549 aa).

12 helical membrane-spanning segments follow: residues 9–29, 80–102, 112–132, 133–153, 176–196, 204–224, 259–279, 290–310, 312–332, 342–362, 377–397, and 402–422; these read LLLG…GLWI, LFGV…FLIA, SFVC…AGYA, NLDP…WFAL, FMTK…PWML, LLLY…PWAL, FYLP…PVAF, GIAF…LSNG, LPTY…HALA, ALGL…IGLV, SLVL…LQAF, and CWAA…AALP.

It belongs to the glycosyltransferase 83 family.

The protein localises to the cell inner membrane. It carries out the reaction 4-amino-4-deoxy-alpha-L-arabinopyranosyl di-trans,octa-cis-undecaprenyl phosphate + lipid IVA = lipid IIA + di-trans,octa-cis-undecaprenyl phosphate.. It participates in lipopolysaccharide metabolism; 4-amino-4-deoxy-beta-L-arabinose-lipid A biosynthesis. Catalyzes the transfer of the L-Ara4N moiety of the glycolipid undecaprenyl phosphate-alpha-L-Ara4N to lipid A. The modified arabinose is attached to lipid A and is required for resistance to polymyxin and cationic antimicrobial peptides. This chain is Undecaprenyl phosphate-alpha-4-amino-4-deoxy-L-arabinose arabinosyl transferase 2, found in Pseudomonas fluorescens (strain Pf0-1).